The primary structure comprises 208 residues: FMN-dependent NADH:quinone oxidoreductase 1 (208 aa).

FMN is bound at residue 17 to 19 (SVS).

It belongs to the azoreductase type 1 family. As to quaternary structure, homodimer. FMN serves as cofactor.

It carries out the reaction 2 a quinone + NADH + H(+) = 2 a 1,4-benzosemiquinone + NAD(+). It catalyses the reaction N,N-dimethyl-1,4-phenylenediamine + anthranilate + 2 NAD(+) = 2-(4-dimethylaminophenyl)diazenylbenzoate + 2 NADH + 2 H(+). In terms of biological role, quinone reductase that provides resistance to thiol-specific stress caused by electrophilic quinones. Functionally, also exhibits azoreductase activity. Catalyzes the reductive cleavage of the azo bond in aromatic azo compounds to the corresponding amines. This Listeria monocytogenes serovar 1/2a (strain ATCC BAA-679 / EGD-e) protein is FMN-dependent NADH:quinone oxidoreductase 1.